Consider the following 428-residue polypeptide: Ectoine/5-hydroxyectoine TRAP transporter large permease protein UehC (428 aa).

Transmembrane regions (helical) follow at residues 9–29, 49–69, 99–119, 139–159, 172–192, 217–237, 242–262, 273–293, 302–322, 324–344, 366–386, and 400–420; these read MIVLLLLGFPMMIPLIAGAFI, LAGIRPASLIAVPMFIFAADI, AAACTMFGAVSGSTQATVVAI, ALIVNASDIAFLIPPSIGMII, FIAGIGPGLLILVLFSAYAYI, ALWPMGFPVIIIGGIYGGVFS, AAACVLYALVLEVLVFRSMSL, GLITAIVFILVGAGAAFSWVI, ILGAIGIAEMGPIGVLFVISI, FFIGCMFVDPIVVILVLVPVF, VAIGSATPPFGCDIFTAIAVF, and FILMLLGVSVALIFFPQIALF.

The protein belongs to the TRAP transporter large permease family. As to quaternary structure, the complex comprises the extracytoplasmic solute receptor protein UehA, and the two transmembrane proteins UehB and UehC.

The protein resides in the cell inner membrane. Part of the tripartite ATP-independent periplasmic (TRAP) transport system UehABC, which imports both ectoine and 5-hydroxyectoine as nutrients, and not as osmoprotectants. This is Ectoine/5-hydroxyectoine TRAP transporter large permease protein UehC from Ruegeria pomeroyi (strain ATCC 700808 / DSM 15171 / DSS-3) (Silicibacter pomeroyi).